The sequence spans 573 residues: Urease subunit alpha (573 aa).

The region spanning 136–573 (GGIDCHVHFI…LPMAQRYFLF (438 aa)) is the Urease domain. Ni(2+)-binding residues include His-141, His-143, and Lys-224. Lys-224 carries the N6-carboxylysine modification. His-226 contacts substrate. His-253 and His-279 together coordinate Ni(2+). His-327 acts as the Proton donor in catalysis. Asp-367 provides a ligand contact to Ni(2+).

Belongs to the metallo-dependent hydrolases superfamily. Urease alpha subunit family. In terms of assembly, heterotrimer of UreA (gamma), UreB (beta) and UreC (alpha) subunits. Three heterotrimers associate to form the active enzyme. Ni cation serves as cofactor. Carboxylation allows a single lysine to coordinate two nickel ions.

It is found in the cytoplasm. The enzyme catalyses urea + 2 H2O + H(+) = hydrogencarbonate + 2 NH4(+). It functions in the pathway nitrogen metabolism; urea degradation; CO(2) and NH(3) from urea (urease route): step 1/1. This chain is Urease subunit alpha, found in Rhodococcus opacus (strain B4).